Reading from the N-terminus, the 196-residue chain is MSNIVWHQHAVSKQSRSELKGQKPLVIWFTGLSGAGKSTLAGALEQALAVEGKHTYLLDGDNVRHGLCGDLGFDDAARQENIRRVGEVAKLMVDAGLIVLTAFISPFRAERELVRNLLGADEFVEVFVDAPLAVCEERDPKGLYKKARAGEIRNFTGIDSAYEAPKQPEIHLLNAGKPVAALVDELLTALRQGNYL.

31–38 contacts ATP; the sequence is GLSGAGKS. The active-site Phosphoserine intermediate is S105.

The protein belongs to the APS kinase family.

It carries out the reaction adenosine 5'-phosphosulfate + ATP = 3'-phosphoadenylyl sulfate + ADP + H(+). It functions in the pathway sulfur metabolism; hydrogen sulfide biosynthesis; sulfite from sulfate: step 2/3. Catalyzes the synthesis of activated sulfate. This chain is Adenylyl-sulfate kinase, found in Aeromonas salmonicida (strain A449).